The primary structure comprises 358 residues: 2'-5'-oligoadenylate synthase 1A (358 aa).

The interaction with dsRNA stretch occupies residues 14–61 (DKFIEVYLLPNTSFRDDVKSAINVLCDFLKERCFRDTVHPVRVSKVVK). S64 is an ATP binding site. 3 residues coordinate Mg(2+): D76, D78, and D149. The interval 201 to 211 (QRPTKLKSLIR) is interaction with dsRNA. 3 residues coordinate ATP: R211, K214, and Q231.

The protein belongs to the 2-5A synthase family. Monomer. Homotetramer. Interacts with OAS1D. Mg(2+) serves as cofactor.

The protein localises to the cytoplasm. It is found in the mitochondrion. The protein resides in the nucleus. It localises to the microsome. Its subcellular location is the endoplasmic reticulum. It carries out the reaction 3 ATP = 5'-triphosphoadenylyl-(2'-&gt;5')-adenylyl-(2'-&gt;5')-adenosine + 2 diphosphate. Its activity is regulated as follows. Produced as a latent enzyme which is activated by dsRNA generated during the course of viral infection. The dsRNA activator must be at least 15 nucleotides long, and no modification of the 2'-hydroxyl group is tolerated. ssRNA or dsDNA do not act as activators. Interferon-induced, dsRNA-activated antiviral enzyme which plays a critical role in cellular innate antiviral response. In addition, it may also play a role in other cellular processes such as apoptosis, cell growth, differentiation and gene regulation. Synthesizes higher oligomers of 2'-5'-oligoadenylates (2-5A) from ATP which then bind to the inactive monomeric form of ribonuclease L (RNase L) leading to its dimerization and subsequent activation. Activation of RNase L leads to degradation of cellular as well as viral RNA, resulting in the inhibition of protein synthesis, thus terminating viral replication. Can mediate the antiviral effect via the classical RNase L-dependent pathway or an alternative antiviral pathway independent of RNase L. This Rattus norvegicus (Rat) protein is 2'-5'-oligoadenylate synthase 1A (Oas1a).